A 969-amino-acid polypeptide reads, in one-letter code: MASNNVAQFAAELKMPAGVLLEQLQAAGVQKASEDDALSEADKARLLDHLRKSHGATDGDKRKITLTRKHTSEIKQSDATGKARTIQVEVRKKRTFVKRDDVSDVAEQGQAQVAEADDDAELKRREEEARREAALLEKQAQELRERQERLEREEAERRAREEAAEAERRRAEEEAAAKRAAAEAAAAQQAAQQAAAAQQAAAPADSAQDEARAAAERAAQREAAKKAEDAAREAAEKARAEQEEIRKRREAAEAEARAIREMMNTPRKAVVKAVEPPKPAEPAKPAEAKGTLHKPAKPEGAQARPAAKKPAAAPAATPAPAGAGDRNKKPGGGKGGWQDDAAKRRGIKTRGDSSGGVDRGWRGGPKGRGRHQDNASSFQAPTEPIVREVHVPETISVADLAHKMAIKASEVIKVMMKMGQMVTINQVLDQETAMIVVEELGHRALAAKLDDPEALLVEGETGSDAEQLPRPPVVTVMGHVDHGKTSLLDYIRRAKVAAGEAGGITQHIGAYHVETPRGVVTFLDTPGHEAFTAMRARGAKATDIVILVVAADDGVMPQTKEAISHAKAGGVPIVVAINKIDKPEANPDRVKQELVAEGVVPEEYGGDSPFVPVSAKTGAGIDDLLENVLLQAEVLELKAPVEAPAKGIVIEAKLDKGKGPVATMLVQSGTLSRGDIVLAGTAYGRVRAMLDENGKPTKEAGPSIPVEIQGLSEVPAAGEEVIVLPDERKAREIALFRQGKFRDVKLAKQQAAKLESMLEQMGEGEVQNLPLIIKADVQGSQEALVQSLLKLSTDEVRVQIVHSAVGGISESDVNLATASKAVIIGFNTRADAQARKLAEANGIDIRYYNIIYDAVDEVKAAMSGMLAPEKREVVTGMVEVRQVFKVPKVGTVAGCMVTDGIVKRSSSVRVLRNNVVIFTGELESLKRFKDDVKEVKQGFECGMSVKNFNDILEGDQFEVFEVTEVARTL.

Residues 49–63 show a composition bias toward basic and acidic residues; that stretch reads HLRKSHGATDGDKRK. Disordered regions lie at residues 49–85, 100–128, and 143–380; these read HLRKSHGATDGDKRKITLTRKHTSEIKQSDATGKART, DDVSDVAEQGQAQVAEADDDAELKRREEE, and LRER…SFQA. Positions 105 to 114 are enriched in low complexity; it reads VAEQGQAQVA. A compositionally biased stretch (basic and acidic residues) spans 143 to 181; the sequence is LRERQERLEREEAERRAREEAAEAERRRAEEEAAAKRAA. Low complexity predominate over residues 182–206; it reads AEAAAAQQAAQQAAAAQQAAAPADS. Positions 209–260 are enriched in basic and acidic residues; that stretch reads DEARAAAERAAQREAAKKAEDAAREAAEKARAEQEEIRKRREAAEAEARAIR. The segment covering 301–323 has biased composition (low complexity); the sequence is AQARPAAKKPAAAPAATPAPAGA. A compositionally biased stretch (gly residues) spans 353–366; the sequence is SSGGVDRGWRGGPK. A tr-type G domain is found at 469 to 638; the sequence is PRPPVVTVMG…LLQAEVLELK (170 aa). Residues 478–485 are G1; the sequence is GHVDHGKT. 478–485 is a binding site for GTP; that stretch reads GHVDHGKT. A G2 region spans residues 503–507; the sequence is GITQH. Residues 524–527 form a G3 region; it reads DTPG. GTP is bound by residues 524 to 528 and 578 to 581; these read DTPGH and NKID. The segment at 578-581 is G4; sequence NKID. The segment at 614–616 is G5; that stretch reads SAK.

Belongs to the TRAFAC class translation factor GTPase superfamily. Classic translation factor GTPase family. IF-2 subfamily.

Its subcellular location is the cytoplasm. Its function is as follows. One of the essential components for the initiation of protein synthesis. Protects formylmethionyl-tRNA from spontaneous hydrolysis and promotes its binding to the 30S ribosomal subunits. Also involved in the hydrolysis of GTP during the formation of the 70S ribosomal complex. This is Translation initiation factor IF-2 from Burkholderia multivorans (strain ATCC 17616 / 249).